We begin with the raw amino-acid sequence, 195 residues long: PAP fimbrial minor pilin protein (195 aa).

Residues 1-22 (MRLRFSVPLFFFGCVFVHGVFA) form the signal peptide. Cys-58 and Cys-97 form a disulfide bridge.

This sequence belongs to the fimbrial protein family.

The protein localises to the secreted. Its subcellular location is the fimbrium. Functionally, fimbriae (also called pili), polar filaments radiating from the surface of the bacterium to a length of 0.5-1.5 micrometers and numbering 100-300 per cell, enable bacteria to colonize the epithelium of specific host organs. PapH seems to anchor the pilus to the bacterial cell. In addition the stoichiometric relationship between PapH and PapA determines the pilus length. The sequence is that of PAP fimbrial minor pilin protein (papH) from Escherichia coli.